Reading from the N-terminus, the 321-residue chain is Small ribosomal subunit biogenesis GTPase RsgA (321 aa).

A CP-type G domain is found at 89-248 (QSWINRPPVA…VADTPGFNRP (160 aa)). GTP contacts are provided by residues 138 to 141 (TKRD) and 190 to 198 (GPSGVGKTS). Positions 273, 278, 280, and 286 each coordinate Zn(2+).

This sequence belongs to the TRAFAC class YlqF/YawG GTPase family. RsgA subfamily. As to quaternary structure, monomer. Associates with 30S ribosomal subunit, binds 16S rRNA. Requires Zn(2+) as cofactor.

The protein localises to the cytoplasm. Its function is as follows. One of several proteins that assist in the late maturation steps of the functional core of the 30S ribosomal subunit. Helps release RbfA from mature subunits. May play a role in the assembly of ribosomal proteins into the subunit. Circularly permuted GTPase that catalyzes slow GTP hydrolysis, GTPase activity is stimulated by the 30S ribosomal subunit. In Prochlorococcus marinus (strain MIT 9313), this protein is Small ribosomal subunit biogenesis GTPase RsgA.